Reading from the N-terminus, the 138-residue chain is Ribulose bisphosphate carboxylase small subunit (138 aa).

It belongs to the RuBisCO small chain family. As to quaternary structure, heterohexadecamer of 8 large and 8 small subunits.

It is found in the plastid. The protein resides in the chloroplast. In terms of biological role, ruBisCO catalyzes two reactions: the carboxylation of D-ribulose 1,5-bisphosphate, the primary event in carbon dioxide fixation, as well as the oxidative fragmentation of the pentose substrate in the photorespiration process. Both reactions occur simultaneously and in competition at the same active site. Although the small subunit is not catalytic it is essential for maximal activity. This Cyanidium caldarium (Red alga) protein is Ribulose bisphosphate carboxylase small subunit.